We begin with the raw amino-acid sequence, 260 residues long: Global transcriptional regulator CodY (260 aa).

The GAF domain stretch occupies residues 1–159 (MPNLLEKTRK…SSTVVGIQLL (159 aa)). The H-T-H motif DNA-binding region spans 207 to 226 (ASVIADRIGITRSVIVNALR).

It belongs to the CodY family.

Its subcellular location is the cytoplasm. In terms of biological role, DNA-binding global transcriptional regulator which is involved in the adaptive response to starvation and acts by directly or indirectly controlling the expression of numerous genes in response to nutrient availability. During rapid exponential growth, CodY is highly active and represses genes whose products allow adaptation to nutrient depletion. This is Global transcriptional regulator CodY from Streptococcus pyogenes serotype M3 (strain SSI-1).